A 57-amino-acid chain; its full sequence is Peptide BmKa1 (57 aa).

An N-terminal signal peptide occupies residues 1-22; that stretch reads MKPRVFFLLFLLVAAMIETGES. 2 stretches are compositionally biased toward acidic residues: residues 20–29 and 45–57; these read GESEENEEGS and VDNEDSDIDGDSD. Positions 20–57 are disordered; that stretch reads GESEENEEGSNESGKSTEAKNTDASVDNEDSDIDGDSD.

The protein belongs to the non-disulfide-bridged peptide (NDBP) superfamily. As to expression, expressed by the venom gland.

Its subcellular location is the secreted. The sequence is that of Peptide BmKa1 from Olivierus martensii (Manchurian scorpion).